The following is a 479-amino-acid chain: Trigger factor (479 aa).

Residues 174–261 (GDIAVVSFSG…LKELKTRELP (88 aa)) enclose the PPIase FKBP-type domain. The interval 438-479 (VLESEAKTSKPAAKSKGSKTKSTKTKTNKANTEKPASDKSKS) is disordered. The span at 453-464 (KGSKTKSTKTKT) shows a compositional bias: basic residues. Residues 468 to 479 (NTEKPASDKSKS) are compositionally biased toward basic and acidic residues.

This sequence belongs to the FKBP-type PPIase family. Tig subfamily.

The protein localises to the cytoplasm. The enzyme catalyses [protein]-peptidylproline (omega=180) = [protein]-peptidylproline (omega=0). Functionally, involved in protein export. Acts as a chaperone by maintaining the newly synthesized protein in an open conformation. Functions as a peptidyl-prolyl cis-trans isomerase. This Prochlorococcus marinus (strain MIT 9313) protein is Trigger factor.